The chain runs to 977 residues: SLIT and NTRK-like protein 3 (977 aa).

An N-terminal signal peptide occupies residues 1–26 (MKPSIAEMLHRGRMLWIILLSTIALG). The Extracellular portion of the chain corresponds to 29 to 654 (TPIPLIEDSE…SPPGGPVPLS (626 aa)). Asn-68 is a glycosylation site (N-linked (GlcNAc...) asparagine). LRR repeat units follow at residues 78–99 (RPFK…SFLH), 102–123 (NAVS…AFNG), 126–147 (ILKR…TFLG), 150–171 (SLEY…AFRN), 174–195 (KLRV…LFKA), and 197–218 (SLTH…GMLD). One can recognise an LRRCT 1 domain in the interval 232–283 (NPWNCTCEIVQLKSWLERIPYTALVGDITCETPFHFHGKDLREIRKTELCPL). The segment at 325 to 360 (EYKSSNKQPKPTKQPRTPRPPSTSQALYPGPNQPPI) is disordered. The 43-residue stretch at 364-406 (QTRPPIPIICPTGCTCNLHINDLGLTVNCKERGFNNISELLPR) folds into the LRRNT domain. LRR repeat units follow at residues 409-430 (NAKK…DFWN), 433-454 (SLDL…AFIN), 457-478 (NLKS…MFRG), 481-502 (SLHY…AFSL), 505-526 (NLKL…AFAG), and 528-549 (SLAR…GVLE). The region spanning 562–613 (NPWDCTCDLVPFKQWIETISSVSVVGDVLCRSPENLTHRDVRTIELEVLCPE) is the LRRCT 2 domain. Asn-596 is a glycosylation site (N-linked (GlcNAc...) asparagine). The helical transmembrane segment at 655-675 (VLILSLLVLFFSAVFVAAGLF) threads the bilayer. The Cytoplasmic portion of the chain corresponds to 676–977 (AYVLRRRRKK…EVLEKTTYRF (302 aa)). 2 disordered regions span residues 708–735 (LFED…KAPP) and 761–790 (EEEV…MGEA). Residues 711-724 (DGGGGGGGSGGGGR) are compositionally biased toward gly residues. Residues 765-775 (AVSSAQEAGSA) show a composition bias toward low complexity.

The protein belongs to the SLITRK family. As to expression, expressed in the occipital lobe of the cerebral cortex of the brain. Expressed at higher levels in some astrocytic brain tumors such as astrocytomas, oligodendrogliomas, glioblastomas, gangliogliomas and primitive neuroectodermal tumors.

The protein resides in the membrane. Suppresses neurite outgrowth. The protein is SLIT and NTRK-like protein 3 (SLITRK3) of Homo sapiens (Human).